Reading from the N-terminus, the 605-residue chain is Probable potassium transport system protein Kup 3 (605 aa).

Transmembrane regions (helical) follow at residues 16–36 (ALGL…TVIF), 49–69 (ILSL…AWLA), 97–117 (VAFA…DAVI), 138–158 (GLST…LFSV), 170–190 (FGPI…VSAF), 212–232 (GLAG…GEAL), 247–267 (AWHF…VFAI), 287–307 (LYIP…QAII), 339–359 (IYLG…MLVF), 368–388 (AYGM…IIVF), 397–417 (ALVA…TFSK), and 418–438 (LPHG…TIII).

It belongs to the HAK/KUP transporter (TC 2.A.72) family.

It is found in the cell inner membrane. The enzyme catalyses K(+)(in) + H(+)(in) = K(+)(out) + H(+)(out). Transport of potassium into the cell. Likely operates as a K(+):H(+) symporter. This Geobacter sulfurreducens (strain ATCC 51573 / DSM 12127 / PCA) protein is Probable potassium transport system protein Kup 3.